We begin with the raw amino-acid sequence, 376 residues long: Chaperone protein DnaJ (376 aa).

One can recognise a J domain in the interval 5–70 (DYYEILGVSK…QKRAAYDQYG (66 aa)). The CR-type zinc-finger motif lies at 131–209 (GVTKEIRIPT…CHGHGRVERS (79 aa)). Residues cysteine 144, cysteine 147, cysteine 161, cysteine 164, cysteine 183, cysteine 186, cysteine 197, and cysteine 200 each contribute to the Zn(2+) site. CXXCXGXG motif repeat units follow at residues 144-151 (CDVCHGSG), 161-168 (CPTCHGSG), 183-190 (CPHCQGRG), and 197-204 (CNKCHGHG).

The protein belongs to the DnaJ family. As to quaternary structure, homodimer. Requires Zn(2+) as cofactor.

Its subcellular location is the cytoplasm. Participates actively in the response to hyperosmotic and heat shock by preventing the aggregation of stress-denatured proteins and by disaggregating proteins, also in an autonomous, DnaK-independent fashion. Unfolded proteins bind initially to DnaJ; upon interaction with the DnaJ-bound protein, DnaK hydrolyzes its bound ATP, resulting in the formation of a stable complex. GrpE releases ADP from DnaK; ATP binding to DnaK triggers the release of the substrate protein, thus completing the reaction cycle. Several rounds of ATP-dependent interactions between DnaJ, DnaK and GrpE are required for fully efficient folding. Also involved, together with DnaK and GrpE, in the DNA replication of plasmids through activation of initiation proteins. The protein is Chaperone protein DnaJ of Escherichia fergusonii (strain ATCC 35469 / DSM 13698 / CCUG 18766 / IAM 14443 / JCM 21226 / LMG 7866 / NBRC 102419 / NCTC 12128 / CDC 0568-73).